The following is a 733-amino-acid chain: Sulfate transporter (733 aa).

Over residues 1–18 (MSLKNEEQNDLSPKDSVK) the composition is skewed to basic and acidic residues. The tract at residues 1 to 37 (MSLKNEEQNDLSPKDSVKGNDQYRAPSGIHLEREEES) is disordered. Phosphoserine is present on residues Ser-12 and Ser-16. Helical transmembrane passes span 113–133 (VMSGLIVGILLVPQSIAYSLL) and 138–158 (PIYGLYTSFFASLIYFILGTS). A glycan (N-linked (GlcNAc...) asparagine) is linked at Asn-194. 6 consecutive transmembrane segments (helical) span residues 214 to 234 (IIVGSTVTFVAGVYQVAMGFF), 237 to 257 (GFVSVYLSDALLGGFVTGASF), 379 to 399 (IDAIAIAIIGFAITVSLSEMF), 415 to 435 (AIGFCNIIPSFFHCFTTSAAL), 453 to 473 (VMTALVLLLVLLVIAPLFFSL), and 519 to 539 (LISTEIGLLTGVCFSMFCVIL). Positions 563-714 (AYKNLQAKSG…SVYEAMTFAE (152 aa)) constitute an STAS domain.

Belongs to the SLC26A/SulP transporter (TC 2.A.53) family. In terms of processing, N-glycosylated.

The protein resides in the cell membrane. It localises to the apical cell membrane. It catalyses the reaction oxalate(in) + sulfate(out) = oxalate(out) + sulfate(in). It carries out the reaction sulfate(out) + 2 chloride(in) = sulfate(in) + 2 chloride(out). The catalysed reaction is oxalate(out) + 2 chloride(in) = oxalate(in) + 2 chloride(out). The enzyme catalyses bromide(in) + chloride(out) = bromide(out) + chloride(in). It catalyses the reaction nitrate(in) + chloride(out) = nitrate(out) + chloride(in). It carries out the reaction iodide(in) + chloride(out) = iodide(out) + chloride(in). Functionally, sulfate transporter which mediates sulfate uptake into chondrocytes in order to maintain adequate sulfation of proteoglycans which is needed for cartilage development. Mediates electroneutral anion exchange of sulfate ions for oxalate ions, sulfate and oxalate ions for chloride and/or hydroxyl ions and chloride ions for bromide, iodide and nitrate ions. The coupling of sulfate transport to both hydroxyl and chloride ions likely serves to ensure transport at both acidic pH when most sulfate uptake is mediated by sulfate-hydroxide exchange and alkaline pH when most sulfate uptake is mediated by sulfate-chloride exchange. Essential for chondrocyte proliferation, differentiation and cell size expansion. The sequence is that of Sulfate transporter (SLC26A2) from Bubalus bubalis (Domestic water buffalo).